A 427-amino-acid chain; its full sequence is GTPase Obg (427 aa).

One can recognise an Obg domain in the interval 1–158 (MFVDIAKIYV…LWVILELKVL (158 aa)). One can recognise an OBG-type G domain in the interval 159 to 330 (ADVGLIGYPN…VLKRAYELLK (172 aa)). Residues 165 to 172 (GYPNVGKS), 190 to 194 (FTTKY), 212 to 215 (DIPG), 282 to 285 (NKMD), and 311 to 313 (SAA) each bind GTP. Ser-172 and Thr-192 together coordinate Mg(2+). The region spanning 347-427 (FVYYKKKDVK…ILDVEFEYYE (81 aa)) is the OCT domain.

This sequence belongs to the TRAFAC class OBG-HflX-like GTPase superfamily. OBG GTPase family. In terms of assembly, monomer. Requires Mg(2+) as cofactor.

The protein localises to the cytoplasm. In terms of biological role, an essential GTPase which binds GTP, GDP and possibly (p)ppGpp with moderate affinity, with high nucleotide exchange rates and a fairly low GTP hydrolysis rate. Plays a role in control of the cell cycle, stress response, ribosome biogenesis and in those bacteria that undergo differentiation, in morphogenesis control. The polypeptide is GTPase Obg (Caldicellulosiruptor bescii (strain ATCC BAA-1888 / DSM 6725 / KCTC 15123 / Z-1320) (Anaerocellum thermophilum)).